The sequence spans 450 residues: Chromosomal replication initiator protein DnaA (450 aa).

Positions 1–79 are domain I, interacts with DnaA modulators; that stretch reads MENIHDLWNR…TGEELLIKFI (79 aa). Positions 79 to 111 are domain II; sequence ITPPNQSEDDFEFQRSSKKHRKPYEESTDFPQS. Residues 112–328 are domain III, AAA+ region; that stretch reads MLNPKYTFDT…GALIRVVAYS (217 aa). ATP contacts are provided by Gly-156, Gly-158, Lys-159, and Thr-160. Positions 329-450 are domain IV, binds dsDNA; the sequence is SLINKEITAD…KEIEEKLKQL (122 aa).

The protein belongs to the DnaA family. As to quaternary structure, oligomerizes as a right-handed, spiral filament on DNA at oriC.

The protein resides in the cytoplasm. Plays an essential role in the initiation and regulation of chromosomal replication. ATP-DnaA binds to the origin of replication (oriC) to initiate formation of the DNA replication initiation complex once per cell cycle. Binds the DnaA box (a 9 base pair repeat at the origin) and separates the double-stranded (ds)DNA. Forms a right-handed helical filament on oriC DNA; dsDNA binds to the exterior of the filament while single-stranded (ss)DNA is stabiized in the filament's interior. The ATP-DnaA-oriC complex binds and stabilizes one strand of the AT-rich DNA unwinding element (DUE), permitting loading of DNA polymerase. After initiation quickly degrades to an ADP-DnaA complex that is not apt for DNA replication. Binds acidic phospholipids. This Geobacillus sp. (strain WCH70) protein is Chromosomal replication initiator protein DnaA.